Here is a 163-residue protein sequence, read N- to C-terminus: Meiotically up-regulated gene 109 protein (163 aa).

Transmembrane regions (helical) follow at residues 61-78 (YRFY…FFIW), 82-104 (ALLA…SLTI), 114-134 (YSIP…APVG), and 136-156 (LFWS…LTTY).

It is found in the membrane. Has a role in meiosis. This chain is Meiotically up-regulated gene 109 protein (mug109), found in Schizosaccharomyces pombe (strain 972 / ATCC 24843) (Fission yeast).